A 1065-amino-acid polypeptide reads, in one-letter code: Presequence protease, mitochondrial (1065 aa).

The N-terminal 42 residues, 1-42, are a transit peptide targeting the mitochondrion; that stretch reads MLRSFSGAGKCKCRIPVSRQPVCGRSLRISSTLTPWNQSRRA. Residue His117 coordinates Zn(2+). Glu120 serves as the catalytic Proton acceptor. His121 contacts Zn(2+). Glu193 is a catalytic residue. Glu230 contacts Zn(2+).

The protein belongs to the peptidase M16 family. PreP subfamily. As to quaternary structure, monomer and homodimer; homodimerization is induced by binding of the substrate. Zn(2+) is required as a cofactor.

It is found in the mitochondrion intermembrane space. The protein resides in the mitochondrion matrix. Functionally, degrades mitochondrial transit peptides after their cleavage in the intermembrane space or in the matrix, and presequence peptides; clearance of these peptides is required to keep the presequence processing machinery running. Preferentially cleaves the N-terminal side of paired basic amino acid residues. Also degrades other unstructured peptides. May function as an ATP-dependent peptidase as opposed to a metalloendopeptidase. The polypeptide is Presequence protease, mitochondrial (cym1) (Aspergillus fumigatus (strain ATCC MYA-4609 / CBS 101355 / FGSC A1100 / Af293) (Neosartorya fumigata)).